The following is a 132-amino-acid chain: Small ribosomal subunit protein uS8 (132 aa).

This sequence belongs to the universal ribosomal protein uS8 family. Part of the 30S ribosomal subunit. Contacts proteins S5 and S12.

Its function is as follows. One of the primary rRNA binding proteins, it binds directly to 16S rRNA central domain where it helps coordinate assembly of the platform of the 30S subunit. The sequence is that of Small ribosomal subunit protein uS8 from Arthrobacter sp. (strain FB24).